The chain runs to 204 residues: uncharacterized protein (204 aa).

Residues 160 to 180 (GLTVAAIASVVVAGAVTYLVV) traverse the membrane as a helical segment.

This sequence to M.pneumoniae MPN_373 C-terminal region.

It localises to the cell membrane. This is an uncharacterized protein from Mycoplasma pneumoniae (strain ATCC 29342 / M129 / Subtype 1) (Mycoplasmoides pneumoniae).